The following is a 248-amino-acid chain: tRNA (guanine-N(1)-)-methyltransferase (248 aa).

S-adenosyl-L-methionine-binding positions include G117 and 137–142 (IGDFVL).

This sequence belongs to the RNA methyltransferase TrmD family. In terms of assembly, homodimer.

The protein resides in the cytoplasm. It catalyses the reaction guanosine(37) in tRNA + S-adenosyl-L-methionine = N(1)-methylguanosine(37) in tRNA + S-adenosyl-L-homocysteine + H(+). Its function is as follows. Specifically methylates guanosine-37 in various tRNAs. The protein is tRNA (guanine-N(1)-)-methyltransferase of Polynucleobacter necessarius subsp. necessarius (strain STIR1).